A 347-amino-acid chain; its full sequence is UDP-3-O-acylglucosamine N-acyltransferase (347 aa).

Catalysis depends on His245, which acts as the Proton acceptor.

Belongs to the transferase hexapeptide repeat family. LpxD subfamily. In terms of assembly, homotrimer.

It catalyses the reaction a UDP-3-O-[(3R)-3-hydroxyacyl]-alpha-D-glucosamine + a (3R)-hydroxyacyl-[ACP] = a UDP-2-N,3-O-bis[(3R)-3-hydroxyacyl]-alpha-D-glucosamine + holo-[ACP] + H(+). It functions in the pathway bacterial outer membrane biogenesis; LPS lipid A biosynthesis. Its function is as follows. Catalyzes the N-acylation of UDP-3-O-acylglucosamine using 3-hydroxyacyl-ACP as the acyl donor. Is involved in the biosynthesis of lipid A, a phosphorylated glycolipid that anchors the lipopolysaccharide to the outer membrane of the cell. The sequence is that of UDP-3-O-acylglucosamine N-acyltransferase from Chromohalobacter salexigens (strain ATCC BAA-138 / DSM 3043 / CIP 106854 / NCIMB 13768 / 1H11).